The primary structure comprises 176 residues: Neuroblastoma suppressor of tumorigenicity 1 (176 aa).

Positions 1 to 17 (MTVWLLIGFLLPVAIFA) are cleaved as a signal peptide. Disulfide bonds link Cys-34–Cys-84, Cys-48–Cys-98, Cys-58–Cys-117, Cys-62–Cys-119, and Cys-81–Cys-122. Residues 34–123 (CEAKNITQIV…ILQCSCQACG (90 aa)) form the CTCK domain. A disordered region spans residues 148 to 176 (ETLGHHHHRPPAREEDSPAQSQREGESEE).

The protein belongs to the DAN family. In terms of assembly, interacts with bmp2; the interaction is blocked in presence of nog.

The protein resides in the secreted. May act as a tumor suppressor. Cytokine that has an axial patterning activity. Acts like bone morpho-genetic protein (BMP) antagonist in embryonic explants. Blocks the bmp2 activity. This Xenopus tropicalis (Western clawed frog) protein is Neuroblastoma suppressor of tumorigenicity 1 (nbl1).